We begin with the raw amino-acid sequence, 423 residues long: Phosphoribosylamine--glycine ligase (423 aa).

The ATP-grasp domain maps to 107–314 (KAFMAKYNIP…LSDLVEAAID (208 aa)). 133–194 (VNQKGAPIVI…EDFLQGEEAS (62 aa)) serves as a coordination point for ATP. 2 residues coordinate Mg(2+): Glu-284 and Asn-286.

This sequence belongs to the GARS family. Mg(2+) serves as cofactor. Requires Mn(2+) as cofactor.

It catalyses the reaction 5-phospho-beta-D-ribosylamine + glycine + ATP = N(1)-(5-phospho-beta-D-ribosyl)glycinamide + ADP + phosphate + H(+). Its pathway is purine metabolism; IMP biosynthesis via de novo pathway; N(1)-(5-phospho-D-ribosyl)glycinamide from 5-phospho-alpha-D-ribose 1-diphosphate: step 2/2. This is Phosphoribosylamine--glycine ligase from Neisseria meningitidis serogroup A / serotype 4A (strain DSM 15465 / Z2491).